The following is a 274-amino-acid chain: PTS system sorbose-specific EIID component (274 aa).

One can recognise a PTS EIID domain in the interval K4 to L273. The next 6 helical transmembrane spans lie at L61–M81, I99–L119, L126–F146, I186–L206, I226–L246, and P253–L273.

It is found in the cell inner membrane. The phosphoenolpyruvate-dependent sugar phosphotransferase system (PTS), a major carbohydrate active transport system, catalyzes the phosphorylation of incoming sugar substrates concomitant with their translocation across the cell membrane. The enzyme II SorABFM PTS system is involved in sorbose transport. The polypeptide is PTS system sorbose-specific EIID component (Klebsiella pneumoniae).